Consider the following 246-residue polypeptide: Eukaryotic translation initiation factor 6 (246 aa).

Residues serine 174 and serine 175 each carry the phosphoserine; by CK1 modification.

It belongs to the eIF-6 family. In terms of assembly, monomer. Associates with the 60S ribosomal subunit. Phosphorylation at Ser-174 and Ser-175 promotes nuclear export.

Its subcellular location is the cytoplasm. The protein resides in the nucleus. The protein localises to the nucleolus. In terms of biological role, binds to the 60S ribosomal subunit and prevents its association with the 40S ribosomal subunit to form the 80S initiation complex in the cytoplasm. Is also involved in ribosome biogenesis. Associates with pre-60S subunits in the nucleus and is involved in its nuclear export. This is Eukaryotic translation initiation factor 6 (tif-6) from Neurospora crassa (strain ATCC 24698 / 74-OR23-1A / CBS 708.71 / DSM 1257 / FGSC 987).